A 106-amino-acid chain; its full sequence is Urease subunit beta (106 aa).

The protein belongs to the urease beta subunit family. Heterotrimer of UreA (gamma), UreB (beta) and UreC (alpha) subunits. Three heterotrimers associate to form the active enzyme.

The protein localises to the cytoplasm. The enzyme catalyses urea + 2 H2O + H(+) = hydrogencarbonate + 2 NH4(+). Its pathway is nitrogen metabolism; urea degradation; CO(2) and NH(3) from urea (urease route): step 1/1. This chain is Urease subunit beta, found in Prochlorococcus marinus (strain MIT 9301).